Here is a 319-residue protein sequence, read N- to C-terminus: Taste receptor type 2 member 30 (319 aa).

Position 1 (Met-1) is a topological domain, extracellular. A helical membrane pass occupies residues 2–22 (ITFLPIIFSILIVVIFVIGNF). Topologically, residues 23–46 (ANGFIALVNSIEWVKRQKISFVDQ) are cytoplasmic. Residues 47 to 67 (ILTALAVSRVGLLWVLLLHWY) traverse the membrane as a helical segment. At 68–86 (ATQLNPAFYSVEVRITVYN) the chain is on the extracellular side. A helical membrane pass occupies residues 87-107 (VWAVTNHFSSWLATSLSMFYL). The Cytoplasmic portion of the chain corresponds to 108–126 (LKIANFSNLIFLRIKRRVK). A helical membrane pass occupies residues 127-147 (SVVLVILLGPLLFLVCHLFVI). Residues 148–178 (NMDETIWTKEYEGNMTWKIKLRSAMYHSNMT) lie on the Extracellular side of the membrane. N-linked (GlcNAc...) asparagine glycans are attached at residues Asn-161 and Asn-176. Residues 179–199 (LTMLANFVPLTLTLISFLLLI) form a helical membrane-spanning segment. The Cytoplasmic portion of the chain corresponds to 200–229 (CSLCKHLKKMQLHGKGSQDPSTKVHIKALQ). The helical transmembrane segment at 230 to 250 (TVTSFLLLCAIYFLSMIISVC) threads the bilayer. The Extracellular segment spans residues 251-259 (NLGRLEKQP). A helical membrane pass occupies residues 260-280 (VFMFCQAIIFSYPSTHPFILI). Residues 281–319 (LGNKKLKQIFLSVLWHVRYWVKDRSLRLHRFTRAALCKG) are Cytoplasmic-facing.

The protein belongs to the G-protein coupled receptor T2R family.

Its subcellular location is the membrane. Receptor that may play a role in the perception of bitterness and is gustducin-linked. May play a role in sensing the chemical composition of the gastrointestinal content. The activity of this receptor may stimulate alpha gustducin, mediate PLC-beta-2 activation and lead to the gating of TRPM5. This chain is Taste receptor type 2 member 30 (TAS2R30), found in Pan troglodytes (Chimpanzee).